The chain runs to 573 residues: DNA polymerase lambda (573 aa).

The region spanning 35-131 is the BRCT domain; sequence EARGWLSSLR…RLTDTEGFSL (97 aa). Disordered regions lie at residues 126–204 and 214–233; these read TEGF…GPQV and TGHY…APEA. A DNA-binding region spans residues 263 to 277; that stretch reads KAYSVQGDKWRALGY. Lys-310 acts as the Schiff-base intermediate with DNA in catalysis. The interval 343-346 is DNA-binding; that stretch reads GTKT. DCTP is bound by residues Arg-384, 415–418, and 424–427; these read SYRR and GDVD. Residues 418 to 427 are involved in primer binding; it reads RGKMTCGDVD. Mn(2+) is bound by residues Asp-425, Asp-427, and Asp-488. Residues 464 to 503 form a DNA-binding region; sequence ENGQQQKYLGVCRLPGPGKRHRRLDIIVVPYCEFACALLY. Asn-511 provides a ligand contact to dCTP.

The protein belongs to the DNA polymerase type-X family. In terms of assembly, interacts with PCNA. Interacts with PAXX; promoting POLL recruitment to double-strand breaks (DSBs) and stimulation of the end-filling activity of POLL. Interacts with XRCC4; promoting POLL recruitment to double-strand breaks (DSBs) and stimulation of the end-filling activity of POLL. Interacts with NHEJ1/XLF; promoting POLL recruitment to double-strand breaks (DSBs) and stimulation of the end-filling activity of POLL. It depends on Mn(2+) as a cofactor.

Its subcellular location is the nucleus. It catalyses the reaction DNA(n) + a 2'-deoxyribonucleoside 5'-triphosphate = DNA(n+1) + diphosphate. Functionally, DNA polymerase that functions in several pathways of DNA repair. Involved in base excision repair (BER) responsible for repair of lesions that give rise to abasic (AP) sites in DNA. Also contributes to DNA double-strand break repair by non-homologous end joining and homologous recombination. Has both template-dependent and template-independent (terminal transferase) DNA polymerase activities. Also has a 5'-deoxyribose-5-phosphate lyase (dRP lyase) activity. This is DNA polymerase lambda from Mus musculus (Mouse).